The sequence spans 323 residues: Breast cancer metastasis-suppressor 1-like protein-A (323 aa).

Over residues 1–15 the composition is skewed to basic and acidic residues; sequence MPVHSREKKESNHEE. A disordered region spans residues 1 to 52; sequence MPVHSREKKESNHEEMEVDFAEQEGSSSEDEDTESSSVSEDGESSEMDDEDC. The span at 16-51 shows a compositional bias: acidic residues; the sequence is MEVDFAEQEGSSSEDEDTESSSVSEDGESSEMDDED. Coiled coils occupy residues 50 to 81 and 156 to 178; these read EDCE…YKER and QTEL…ITSE.

This sequence belongs to the BRMS1 family.

The protein resides in the nucleus. Its function is as follows. Involved in the histone deacetylase (HDAC1)-dependent transcriptional repression activity. In Danio rerio (Zebrafish), this protein is Breast cancer metastasis-suppressor 1-like protein-A (brms1la).